Reading from the N-terminus, the 351-residue chain is Phosphoribosylformylglycinamidine cyclo-ligase (351 aa).

It belongs to the AIR synthase family.

Its subcellular location is the cytoplasm. It carries out the reaction 2-formamido-N(1)-(5-O-phospho-beta-D-ribosyl)acetamidine + ATP = 5-amino-1-(5-phospho-beta-D-ribosyl)imidazole + ADP + phosphate + H(+). Its pathway is purine metabolism; IMP biosynthesis via de novo pathway; 5-amino-1-(5-phospho-D-ribosyl)imidazole from N(2)-formyl-N(1)-(5-phospho-D-ribosyl)glycinamide: step 2/2. The protein is Phosphoribosylformylglycinamidine cyclo-ligase of Burkholderia mallei (strain NCTC 10247).